The primary structure comprises 259 residues: Small ribosomal subunit protein mS23 (259 aa).

This sequence belongs to the mitochondrion-specific ribosomal protein mS23 family. In terms of assembly, component of the mitochondrial small ribosomal subunit.

It is found in the mitochondrion. The polypeptide is Small ribosomal subunit protein mS23 (RSM25) (Pyricularia oryzae (strain 70-15 / ATCC MYA-4617 / FGSC 8958) (Rice blast fungus)).